The following is a 230-amino-acid chain: Nicotinamide riboside kinase 2 (230 aa).

9-17 is an ATP binding site; it reads GMTNGGKTT. Residues Thr16 and Asp35 each contribute to the Mg(2+) site. Residue Asp35 is the Proton acceptor of the active site. Residues 35–38 and 54–55 contribute to the substrate site; these read DDFF and WD. Arg130 serves as a coordination point for ATP. Residues Arg131 and 136-137 contribute to the substrate site; that span reads YT. Residues 134 to 136 and 174 to 176 each bind ATP; these read RNY and KSR. Positions 191 to 230 are disordered; that stretch reads LLNRSQESAPSPARPARTQGPGRGCGHRTARPAASQQDSM.

This sequence belongs to the uridine kinase family. NRK subfamily. Monomer. Interacts with ITGB1 alone or when associated with alpha-7, but not with alpha-5. As to expression, predominantly expressed in skeletal muscle and, at a much lower level, in the heart (at protein level). No expression in brain, kidney, liver, lung, pancreas nor placenta.

The enzyme catalyses beta-nicotinamide D-riboside + ATP = beta-nicotinamide D-ribonucleotide + ADP + H(+). The catalysed reaction is beta-D-ribosylnicotinate + ATP = nicotinate beta-D-ribonucleotide + ADP + H(+). It functions in the pathway cofactor biosynthesis; NAD(+) biosynthesis. In terms of biological role, catalyzes the phosphorylation of nicotinamide riboside (NR) and nicotinic acid riboside (NaR) to form nicotinamide mononucleotide (NMN) and nicotinic acid mononucleotide (NaMN). Reduces laminin matrix deposition and cell adhesion to laminin, but not to fibronectin. Involved in the regulation of PXN at the protein level and of PXN tyrosine phosphorylation. May play a role in the regulation of terminal myogenesis. The sequence is that of Nicotinamide riboside kinase 2 (NMRK2) from Homo sapiens (Human).